The following is an 855-amino-acid chain: DNA mismatch repair protein MutS (855 aa).

Residue 616-623 participates in ATP binding; sequence GPNMGGKS.

Belongs to the DNA mismatch repair MutS family.

This protein is involved in the repair of mismatches in DNA. It is possible that it carries out the mismatch recognition step. This protein has a weak ATPase activity. The protein is DNA mismatch repair protein MutS of Salmonella gallinarum (strain 287/91 / NCTC 13346).